The chain runs to 248 residues: Transcription factor bHLH35 (248 aa).

The span at 37–54 (SGSYDSSSPDGAASSPAS) shows a compositional bias: low complexity. Positions 37 to 60 (SGSYDSSSPDGAASSPASKNIVSE) are disordered. A bHLH domain is found at 51–100 (SPASKNIVSERNRRQKLNQRLFALRSVVPNITKMDKASIIKDAISYIEGL).

As to quaternary structure, homodimer. In terms of tissue distribution, expressed constitutively in roots, leaves, stems, and flowers.

The protein localises to the nucleus. This is Transcription factor bHLH35 (BHLH35) from Arabidopsis thaliana (Mouse-ear cress).